Reading from the N-terminus, the 120-residue chain is Large ribosomal subunit protein uL18 (120 aa).

The protein belongs to the universal ribosomal protein uL18 family. Part of the 50S ribosomal subunit; part of the 5S rRNA/L5/L18/L25 subcomplex. Contacts the 5S and 23S rRNAs.

This is one of the proteins that bind and probably mediate the attachment of the 5S RNA into the large ribosomal subunit, where it forms part of the central protuberance. The sequence is that of Large ribosomal subunit protein uL18 from Finegoldia magna (strain ATCC 29328 / DSM 20472 / WAL 2508) (Peptostreptococcus magnus).